The primary structure comprises 218 residues: LHFPL tetraspan subfamily member 3 protein (218 aa).

A run of 4 helical transmembrane segments spans residues 22–42 (IGVL…VCFI), 96–116 (FFIG…GLFF), 126–146 (ICAW…MIFP), and 177–197 (ILAI…FVLG).

This sequence belongs to the LHFP family.

The protein resides in the membrane. The chain is LHFPL tetraspan subfamily member 3 protein from Xenopus laevis (African clawed frog).